The sequence spans 265 residues: MTDPSAHSAALTYGSYLALDELLAAQRPRSEEHDELLFIVVHQVYELWFKQVVHELTWLQERLHRGEGGHALATLKRVLTILKTVVAQVDVIETMTPRQFTAFRSRLEAASGFQSAQFRVLEAMLGRRDDRMLAPYPPDGPGYARIAAAMAAPSLFDSLLRYLATQGFETPVVPEPRPAGWRQPSEAVQRVLLEVYRADGEAALVCERFVDLDEGVQEWRYRHVKMVERTIGDKPGTGGSAGARYLRSTLFTPAFPDLWAVRGAL.

Residues 38–42 (FIVVH) and Arg104 each bind substrate. His223 is a heme binding site. Thr237 contacts substrate.

The protein belongs to the tryptophan 2,3-dioxygenase family. In terms of assembly, homotetramer. Heme serves as cofactor.

The enzyme catalyses L-tryptophan + O2 = N-formyl-L-kynurenine. It functions in the pathway amino-acid degradation; L-tryptophan degradation via kynurenine pathway; L-kynurenine from L-tryptophan: step 1/2. Heme-dependent dioxygenase that catalyzes the oxidative cleavage of the L-tryptophan (L-Trp) pyrrole ring and converts L-tryptophan to N-formyl-L-kynurenine. Catalyzes the oxidative cleavage of the indole moiety. In Anaeromyxobacter dehalogenans (strain 2CP-C), this protein is Tryptophan 2,3-dioxygenase.